The following is a 280-amino-acid chain: NLP effector protein Pc553546 (280 aa).

Residues 1–19 (MNLVAALVLCFALLSSVRG) form the signal peptide. Positions 123 to 129 (AGRHDWA) match the Hepta-peptide GHRHDWE motif motif. N142 and N209 each carry an N-linked (GlcNAc...) asparagine glycan.

Belongs to the Necrosis inducing protein (NPP1) family.

The protein resides in the secreted. Secreted effector that contributes strongly to virulence during infection by P.capsici. In Phytophthora capsici, this protein is NLP effector protein Pc553546.